Reading from the N-terminus, the 215-residue chain is uncharacterized protein (215 aa).

Positions 1–17 are cleaved as a signal peptide; it reads MKKVLASATILSLMLVG. The interval 17-110 is disordered; sequence GCSNGGNDES…NKQQQSVQDN (94 aa). Cysteine 18 is lipidated: N-palmitoyl cysteine. Residue cysteine 18 is the site of S-diacylglycerol cysteine attachment. Residues 25–62 show a composition bias toward basic and acidic residues; it reads ESSHKDDSSKTEQKDKSSSQHDSKKDSKRNDTNNKQDN. 2 stretches are compositionally biased toward low complexity: residues 63-76 and 91-110; these read QENNTNKEQTNNQN and NSNGNSSDNQNKQQQSVQDN.

It is found in the cell membrane. This is an uncharacterized protein from Staphylococcus epidermidis (strain ATCC 35984 / DSM 28319 / BCRC 17069 / CCUG 31568 / BM 3577 / RP62A).